The chain runs to 419 residues: Tyrosine--tRNA ligase (419 aa).

Tyrosine 34 is an L-tyrosine binding site. Positions proline 39–histidine 48 match the 'HIGH' region motif. L-tyrosine contacts are provided by tyrosine 168 and glutamine 172. The 'KMSKS' region signature appears at lysine 230–serine 234. Residue lysine 233 coordinates ATP. Residues alanine 352–tyrosine 418 form the S4 RNA-binding domain.

The protein belongs to the class-I aminoacyl-tRNA synthetase family. TyrS type 1 subfamily. As to quaternary structure, homodimer.

The protein resides in the cytoplasm. It carries out the reaction tRNA(Tyr) + L-tyrosine + ATP = L-tyrosyl-tRNA(Tyr) + AMP + diphosphate + H(+). Its function is as follows. Catalyzes the attachment of tyrosine to tRNA(Tyr) in a two-step reaction: tyrosine is first activated by ATP to form Tyr-AMP and then transferred to the acceptor end of tRNA(Tyr). This is Tyrosine--tRNA ligase from Listeria monocytogenes serovar 1/2a (strain ATCC BAA-679 / EGD-e).